Here is a 314-residue protein sequence, read N- to C-terminus: MAPALPFALPSLAGKVYLVTGGNTGVGFHTVDELAKHGARVYMGARSPGKAEAAIKTIRAETPTADVHFLQMDLMDLHSVVAAAKSFKEKETKLHGLVNNAGIMATPYALSGDGFEAQWQTNYLSHWVLTWHLLDVLVRTLQAEGGAAGSVRVVDVTSDGHNFAPKVGIDFKDINLEKAGVFARYGQSKVGNILHAKQLNKLYGPSGSETAKKGIWTAAVHPGHLDTNLNKQTAFPKFVNTLLRAVGAYSPPRDGAFNSVFAVASPEFKVADSGEYFVPGQKKKQPSKVARDMELAGRLWKWTEEELRKRELLD.

NADP(+) contacts are provided by Val26, Lys50, Asp73, Asn100, Tyr185, and Lys189. The Proton acceptor role is filled by Tyr185. The active-site Lowers pKa of active site Tyr is Lys189.

It belongs to the short-chain dehydrogenases/reductases (SDR) family.

It functions in the pathway secondary metabolite biosynthesis; terpenoid biosynthesis. Its function is as follows. Short-chain dehydrogenase/reductase; part of the gene cluster that mediates the biosynthesis of various drimane-type sesquiterpene esters, compounds that exhibit diverse biological activities and are widely present in eukaryotes. The pathway begins with the synthesis of the backbone drimenol by the terpene cyclase drtB using farnesyl pyrophosphate (FPP) as substrate. The cytochrome P450 monooxygenase drtD is then responsible for the hydroxylations at C-6, C-9 and C-12, as well as the oxidation of hydroxyl groups at C-6 and C-11 to a ketone and an aldehyde, respectively. Then, the biosynthesis can go in two directions, either the hydroxylated drimenol is further hydroxylated at C-2 and C-3 by an enzyme(s) not associated with the drt cluster, or the FAD-binding oxidoreductase drtC further oxidizes C-11 or C-12 to form the butyrolactone ring. DrtB, drtD and drtC are solely responsible for the formation of the different drimane structures observed during drimane sesquiterpenes biosynthesis. The polyketide synthase drtA synthesizes different lengths (C6 and C8) of PKS chains, which are then oxidized to varying degrees by the short-chain dehydrogenase drtF. Finally, these PKS chains are transferred onto drimane sesquiterpenes by the acyltransferase drtE, forming the sesquiterpene esters. In addition to the different fatty acyl-CoA chains produced by drtA, drtE is also able to use cinnamoyl-CoA as a substrate. This is Short-chain dehydrogenase/reductase drtF from Aspergillus calidoustus.